The following is a 535-amino-acid chain: Probable C4-dicarboxylate sensor kinase (535 aa).

The Cytoplasmic portion of the chain corresponds to 1–11 (MNKKKLSIRWK). A helical transmembrane segment spans residues 12–32 (ITILSYILVIFSFLIGGIVLI). Topologically, residues 33-172 (GNIQHTEERE…IADILLHLKR (140 aa)) are extracellular. A helical transmembrane segment spans residues 173–193 (DIAFIVVLTLGFGLAGSFLLA). Over 194 to 535 (RHIKKQMFQL…MKGEEAQHGS (342 aa)) the chain is Cytoplasmic. One can recognise a PAS domain in the interval 213 to 276 (EERTATFHSM…PEIVERNKAV (64 aa)). The 196-residue stretch at 333–528 (VQNHEHMNKL…SFSIVFPMKG (196 aa)) folds into the Histidine kinase domain. H336 is modified (phosphohistidine; by autocatalysis).

It is found in the cell membrane. It carries out the reaction ATP + protein L-histidine = ADP + protein N-phospho-L-histidine.. Functionally, member of the two-component regulatory system DctS/DctR. Probably activates DctR by phosphorylation. Essential for expression of dctP. In Bacillus subtilis (strain 168), this protein is Probable C4-dicarboxylate sensor kinase (dctS).